The sequence spans 234 residues: DNA repair and recombination protein RadB (234 aa).

Belongs to the eukaryotic RecA-like protein family. RadB subfamily.

Functionally, involved in DNA repair and in homologous recombination. May regulate the cleavage reactions of the branch-structured DNA. Has a very weak ATPase activity that is not stimulated by DNA. Binds DNA but does not promote DNA strands exchange. This chain is DNA repair and recombination protein RadB, found in Methanobrevibacter smithii (strain ATCC 35061 / DSM 861 / OCM 144 / PS).